We begin with the raw amino-acid sequence, 331 residues long: Fructose-1,6-bisphosphatase class 1 2 (331 aa).

Glutamate 80, aspartate 98, leucine 100, and aspartate 101 together coordinate Mg(2+). Residues 101 to 104 (DGSS) and asparagine 189 contribute to the substrate site. Position 261 (glutamate 261) interacts with Mg(2+).

The protein belongs to the FBPase class 1 family. Homotetramer. The cofactor is Mg(2+).

The protein localises to the cytoplasm. It catalyses the reaction beta-D-fructose 1,6-bisphosphate + H2O = beta-D-fructose 6-phosphate + phosphate. It functions in the pathway carbohydrate biosynthesis; Calvin cycle. In Cereibacter sphaeroides (strain ATCC 17029 / ATH 2.4.9) (Rhodobacter sphaeroides), this protein is Fructose-1,6-bisphosphatase class 1 2.